We begin with the raw amino-acid sequence, 547 residues long: CTP synthase (547 aa).

The segment at 1–266 is amidoligase domain; sequence MTKYIFVTGG…GDYLVERLGL (266 aa). Ser-13 contributes to the CTP binding site. Residue Ser-13 participates in UTP binding. 14-19 contributes to the ATP binding site; sequence SVGKGI. Tyr-54 is a binding site for L-glutamine. Position 71 (Asp-71) interacts with ATP. The Mg(2+) site is built by Asp-71 and Glu-141. Residues 148–150, 187–192, and Lys-223 contribute to the CTP site; these read DIE and KTKPTQ. Residues 187–192 and Lys-223 contribute to the UTP site; that span reads KTKPTQ. Positions 291–533 constitute a Glutamine amidotransferase type-1 domain; it reads PIALVGKYVE…IAAAAQTLLA (243 aa). Gly-353 serves as a coordination point for L-glutamine. Residue Cys-380 is the Nucleophile; for glutamine hydrolysis of the active site. Residues 381 to 384, Glu-404, and Arg-461 each bind L-glutamine; that span reads LGMQ. Catalysis depends on residues His-506 and Glu-508.

This sequence belongs to the CTP synthase family. In terms of assembly, homotetramer.

It catalyses the reaction UTP + L-glutamine + ATP + H2O = CTP + L-glutamate + ADP + phosphate + 2 H(+). The catalysed reaction is L-glutamine + H2O = L-glutamate + NH4(+). The enzyme catalyses UTP + NH4(+) + ATP = CTP + ADP + phosphate + 2 H(+). The protein operates within pyrimidine metabolism; CTP biosynthesis via de novo pathway; CTP from UDP: step 2/2. Allosterically activated by GTP, when glutamine is the substrate; GTP has no effect on the reaction when ammonia is the substrate. The allosteric effector GTP functions by stabilizing the protein conformation that binds the tetrahedral intermediate(s) formed during glutamine hydrolysis. Inhibited by the product CTP, via allosteric rather than competitive inhibition. Functionally, catalyzes the ATP-dependent amination of UTP to CTP with either L-glutamine or ammonia as the source of nitrogen. Regulates intracellular CTP levels through interactions with the four ribonucleotide triphosphates. The sequence is that of CTP synthase from Chloroflexus aggregans (strain MD-66 / DSM 9485).